Consider the following 232-residue polypeptide: Ribose-5-phosphate isomerase A (232 aa).

Residues 31–34 (TGST), 87–90 (DGAD), and 100–103 (KGGG) contribute to the substrate site. Glutamate 109 acts as the Proton acceptor in catalysis. Lysine 127 is a binding site for substrate.

It belongs to the ribose 5-phosphate isomerase family. In terms of assembly, homodimer.

It carries out the reaction aldehydo-D-ribose 5-phosphate = D-ribulose 5-phosphate. Its pathway is carbohydrate degradation; pentose phosphate pathway; D-ribose 5-phosphate from D-ribulose 5-phosphate (non-oxidative stage): step 1/1. In terms of biological role, catalyzes the reversible conversion of ribose-5-phosphate to ribulose 5-phosphate. In Bifidobacterium longum (strain NCC 2705), this protein is Ribose-5-phosphate isomerase A.